We begin with the raw amino-acid sequence, 720 residues long: Engulfment and cell motility protein 2 (720 aa).

Residue Y48 is modified to Phosphotyrosine. One can recognise an ELMO domain in the interval 310–484; the sequence is QAQRDIIFEL…QVVREQITRA (175 aa). At S503 the chain carries Phosphoserine. In terms of domain architecture, PH spans 553 to 674; the sequence is SSFRKIGNRR…LLGKDMSSEL (122 aa). Positions 700 to 707 match the SH3-binding motif; that stretch reads PEAPPPVP. Position 717 is a phosphotyrosine (Y717).

As to quaternary structure, interacts directly with the SH3-domain of DOCK1 via its SH3-binding site. Probably forms a heterotrimeric complex with DOCK1 and RAC1. Interacts with ARHGEF16, DOCK4 and EPHA2; mediates activation of RAC1 by EPHA2. Interacts with ADGRB3. Interacts with AUTS2; the interaction is direct.

It localises to the cytoplasm. It is found in the cytosol. The protein resides in the membrane. Functionally, involved in cytoskeletal rearrangements required for phagocytosis of apoptotic cells and cell motility. Acts in association with DOCK1 and CRK. Was initially proposed to be required in complex with DOCK1 to activate Rac Rho small GTPases. May enhance the guanine nucleotide exchange factor (GEF) activity of DOCK1. This chain is Engulfment and cell motility protein 2 (ELMO2), found in Bos taurus (Bovine).